The primary structure comprises 419 residues: Potassium/proton antiporter CemA (419 aa).

4 helical membrane-spanning segments follow: residues 196 to 216 (LASI…TLLF), 297 to 317 (IIEL…LCIA), 344 to 364 (ILLI…EVLI), and 371 to 391 (FGFV…PVVL).

It belongs to the CemA family.

The protein localises to the plastid. It localises to the chloroplast inner membrane. It carries out the reaction K(+)(in) + H(+)(out) = K(+)(out) + H(+)(in). Functionally, contributes to K(+)/H(+) antiport activity by supporting proton efflux to control proton extrusion and homeostasis in chloroplasts in a light-dependent manner to modulate photosynthesis. Prevents excessive induction of non-photochemical quenching (NPQ) under continuous-light conditions. Indirectly promotes efficient inorganic carbon uptake into chloroplasts. This Chara vulgaris (Common stonewort) protein is Potassium/proton antiporter CemA.